The chain runs to 420 residues: 4-hydroxy-3-methylbut-2-en-1-yl diphosphate synthase (flavodoxin) (420 aa).

Positions 307, 310, 353, and 360 each coordinate [4Fe-4S] cluster.

Belongs to the IspG family. Requires [4Fe-4S] cluster as cofactor.

It catalyses the reaction (2E)-4-hydroxy-3-methylbut-2-enyl diphosphate + oxidized [flavodoxin] + H2O + 2 H(+) = 2-C-methyl-D-erythritol 2,4-cyclic diphosphate + reduced [flavodoxin]. It functions in the pathway isoprenoid biosynthesis; isopentenyl diphosphate biosynthesis via DXP pathway; isopentenyl diphosphate from 1-deoxy-D-xylulose 5-phosphate: step 5/6. Functionally, converts 2C-methyl-D-erythritol 2,4-cyclodiphosphate (ME-2,4cPP) into 1-hydroxy-2-methyl-2-(E)-butenyl 4-diphosphate. This chain is 4-hydroxy-3-methylbut-2-en-1-yl diphosphate synthase (flavodoxin), found in Brucella suis biovar 1 (strain 1330).